The sequence spans 56 residues: uncharacterized protein (56 aa).

2 consecutive 4Fe-4S ferredoxin-type domains span residues 2 to 28 (VKIDYKKCGYCGACVGVCEKLAINLIE) and 29 to 56 (HIIVIDEKKCNNCKLCTIVCPLNALEGE). [4Fe-4S] cluster-binding residues include cysteine 9, cysteine 12, cysteine 15, cysteine 19, cysteine 38, cysteine 41, cysteine 44, and cysteine 48.

It depends on [4Fe-4S] cluster as a cofactor.

Its function is as follows. Ferredoxins are iron-sulfur proteins that transfer electrons in a wide variety of metabolic reactions. This is an uncharacterized protein from Methanocaldococcus jannaschii (strain ATCC 43067 / DSM 2661 / JAL-1 / JCM 10045 / NBRC 100440) (Methanococcus jannaschii).